A 436-amino-acid polypeptide reads, in one-letter code: MIGGLFIYNHKGEVLISRVYRDDIGRNAVDAFRVNVIHARQQVRSPVTNIARTSFFHVKRSNIWLAAVTKQNVNAAMVFEFLYKMCDVMTAYFGKISEENIKNNFVLIYELLDEILDFGYPQNSETGALKTFITQQGIKSQHLTKEEQSQITSQVTGQIGWRREGIKYRRNELFLDVLESVNLLMSPQGQVLSAHVSGRVVMKSYLSGMPECKFGMNDKIVIDKQGKGGTTDDTGKSGKQSIAIDDCTFHQCVRLSKFDSERSISFIPPDGEYELMRYRTTKDIILPFRVIPLVREVGRTKLEVKVVIKSNFKPSLLAQKIEVRIPTPLNTSGVQVICMKGKAKYKASENAIVWKIKRMVGMKESQISAEIELLPTNDKKKWARPPISMNFEVPFAPSGLKVRYLKVFEPKLNYSDHDVIKWVRYIGRSGIYETRC.

An MHD domain is found at Arg170 to Arg435. The a 1,2-diacyl-sn-glycero-3-phospho-(1D-myo-inositol-3,4,5-trisphosphate) site is built by Lys342, Lys346, and Lys355.

The protein belongs to the adaptor complexes medium subunit family. Adaptor protein complex 2 (AP-2) is a heterotetramer composed of two large adaptins (alpha-type subunit and beta-type subunit), a medium adaptin (mu-type subunit) and a small adaptin (sigma-type subunit).

The protein resides in the cell membrane. It localises to the membrane. The protein localises to the coated pit. In terms of biological role, component of the adaptor complexes which link clathrin to receptors in coated vesicles. Clathrin-associated protein complexes are believed to interact with the cytoplasmic tails of membrane proteins, leading to their selection and concentration. AP50 is a subunit of the plasma membrane adaptor. The complex binds polyphosphoinositide-containing lipids. The polypeptide is AP-2 complex subunit mu-B (ap2m1b) (Danio rerio (Zebrafish)).